A 1938-amino-acid polypeptide reads, in one-letter code: Myosin heavy chain, striated muscle (1938 aa).

The region spanning 29 to 79 (DGKKNCWVPDEKEGFASAEIQSSKGDEITVKIVADSSTRTVKKDDIQSMNP) is the Myosin N-terminal SH3-like domain. The Myosin motor domain occupies 83–775 (EKLEDMANMT…VLGNLEEMRD (693 aa)). 176-183 (GESGAGKT) is an ATP binding site. Positions 653-675 (LNKLMKNLYSTHPHFVRCIIPNE) are actin-binding. Residues 778-805 (LSKIISMFQAHIRGYLIRKAYKKLQDQR) enclose the IQ domain. Residues 836-1938 (LLSIARQEEE…RSSVSVSASN (1103 aa)) form a rodlike tail (S2 and LMM domains) region. Residues 836 to 1938 (LLSIARQEEE…RSSVSVSASN (1103 aa)) are a coiled coil. 2 stretches are compositionally biased toward basic and acidic residues: residues 1041–1058 (VRGDVEKAKRKVEQDLKS) and 1212–1225 (SKLEKDKKDLKREM). Disordered regions lie at residues 1041–1062 (VRGDVEKAKRKVEQDLKSTQEN), 1187–1332 (SALR…EVRN), 1344–1363 (LEEEQESKSDVQRQLSKANN), and 1898–1938 (HELE…SASN). A compositionally biased stretch (polar residues) spans 1265-1285 (RSINELQSQKSRLQAENSDLT). Basic and acidic residues-rich tracts occupy residues 1286–1303 (RQLEDAEHRVSVLSKEKS), 1310–1332 (EDARRSLEEETRARSKLQNEVRN), and 1344–1354 (LEEEQESKSDV). The segment covering 1922–1938 (RSSVSVQRSSVSVSASN) has biased composition (low complexity).

Belongs to the TRAFAC class myosin-kinesin ATPase superfamily. Myosin family. In terms of assembly, muscle myosin is a hexameric protein that consists of 2 heavy chain subunits (MHC), 2 alkali light chain subunits (MLC) and 2 regulatory light chain subunits (MLC-2).

It is found in the cytoplasm. It localises to the myofibril. In terms of biological role, muscle contraction. Myosin is a protein that binds to F-actin and has ATPase activity that is activated by F-actin. This Argopecten irradians (Bay scallop) protein is Myosin heavy chain, striated muscle.